Reading from the N-terminus, the 204-residue chain is uncharacterized protein (204 aa).

Residues 109-136 (QFDIDVHKDQIEKLKDLYKALLRIAETT) adopt a coiled-coil conformation.

This is an uncharacterized protein from Bacillus subtilis (strain 168).